A 564-amino-acid chain; its full sequence is Oxalyl-CoA decarboxylase (564 aa).

Substrate contacts are provided by Ile-32 and Tyr-118. ADP-binding residues include Arg-158 and Lys-220. 261 to 265 (AAARS) contacts substrate. The ADP site is built by Arg-280, Asp-302, and Ile-322. Asn-355 is a binding site for substrate. Residues Tyr-372 and 396–398 (ANT) contribute to the thiamine diphosphate site. Residue 403 to 404 (RN) coordinates substrate. 421 to 423 (GVM) is a thiamine diphosphate binding site. Asp-447 is a binding site for Mg(2+). 448–449 (SA) provides a ligand contact to thiamine diphosphate. Residues Asn-474 and Gly-476 each coordinate Mg(2+). Position 478 (Tyr-478) interacts with thiamine diphosphate. 550-552 (SGH) lines the substrate pocket.

It belongs to the TPP enzyme family. As to quaternary structure, homotetramer; dimer of dimers. Mg(2+) is required as a cofactor. Thiamine diphosphate serves as cofactor.

The catalysed reaction is oxalyl-CoA + H(+) = formyl-CoA + CO2. The protein operates within metabolic intermediate degradation; oxalate degradation; CO(2) and formate from oxalate: step 2/2. In terms of biological role, involved in the catabolism of oxalate and in the adapatation to low pH via the induction of the oxalate-dependent acid tolerance response (ATR). Catalyzes the decarboxylation of oxalyl-CoA to yield carbon dioxide and formyl-CoA. In Escherichia coli O157:H7, this protein is Oxalyl-CoA decarboxylase (oxc).